Here is a 323-residue protein sequence, read N- to C-terminus: Phosphatidylethanolamine:ceramide ethanolaminephosphotransferase (323 aa).

Residues 1–26 (MAVPPVEMYSGSFWNRMRKPLPLRTQ) lie on the Cytoplasmic side of the membrane. A helical transmembrane segment spans residues 27–47 (VIRFTVVFVIVSFILVVALQI). The Extracellular portion of the chain corresponds to 48-74 (THERMPDPKVTKPLPDLGFELLTKVPG). Residues 75-95 (MYVLADCCIGFLNILSVFTAF) traverse the membrane as a helical segment. The Cytoplasmic segment spans residues 96-147 (KLYLLHRHCVGSGEPELPCNIPGVSRFFLSVWLCKENCRIELRNIHTIAWIR). A helical transmembrane segment spans residues 148–168 (FITSYALLLLSRSIIMVVTSL). Over 169–187 (PNPDDLCQNPPKIENRVKD) the chain is Extracellular. The chain crosses the membrane as a helical span at residues 188–208 (ILLTVLTAGAGSIHCGDLMYS). Residues 209–233 (GHTVILTLHLMFHWIYGAMVHWSFR) are Cytoplasmic-facing. Residues 234 to 254 (PVVTVVAIFGYYCIVASRFHY) traverse the membrane as a helical segment. At 255 to 257 (TDD) the chain is on the extracellular side. Residues 258–278 (VLVAIYLTIATFIAVGHNADG) traverse the membrane as a helical segment. At 279–323 (APWQLQLFIRWWPCCGANSREVAEDGVPVAIVIKNEEMMNFEGKS) the chain is on the cytoplasmic side.

It belongs to the sphingomyelin synthase family.

It is found in the membrane. It carries out the reaction an N-acylsphing-4-enine + a 1,2-diacyl-sn-glycero-3-phosphoethanolamine = an N-acylsphing-4-enine 1-phosphoethanolamine + a 1,2-diacyl-sn-glycerol. The enzyme catalyses an N-acylsphinganine + a 1,2-diacyl-sn-glycero-3-phosphoethanolamine = an N-acylsphinganine-1-phosphoethanolamine + a 1,2-diacyl-sn-glycerol. Predominantly synthesizes ethanolamine-phosphorylceramide (EPC), with minimal sphingomyelin (SM)/inositol phosphorylceramide (IPC) synthase activity. Specificity is likely to be defined by residues in the lumenal catalytic domain that interact with the polar head groups of the phospholipid donors. EPC is synthesized by both stages of the parasite life cycle, bloodstream forms (BSF) and procyclic forms (PCF), by transferring the phosphoethanolamine from a 1,2-diacyl-sn-glycero-3-phosphoethanolamine to an N-acylsphing-4-enine (ceramide) or an N-acylsphinganine (dihydroceramide). Similarly, SM is synthesized by transferring the phosphocholine from a 1,2-diacyl-sn-glycero-3-phosphocholine to ceramide or dihydroceramide by BSF and PCF, while IPC is confined to PCF. The ceramide/dihydroceramide ratios are skewed towards dihydroceramide in PCF parasites and ceramide in BSF parasites, this is likely due to differential expression and/or regulation of dihydroceramide desaturase, the enzyme responsible for converting dihydroceramide to ceramide. This is Phosphatidylethanolamine:ceramide ethanolaminephosphotransferase from Trypanosoma brucei brucei.